The sequence spans 282 residues: 2,3,4,5-tetrahydropyridine-2,6-dicarboxylate N-succinyltransferase (282 aa).

The substrate site is built by Arg-109 and Asp-146.

Belongs to the transferase hexapeptide repeat family. As to quaternary structure, homotrimer.

It localises to the cytoplasm. The enzyme catalyses (S)-2,3,4,5-tetrahydrodipicolinate + succinyl-CoA + H2O = (S)-2-succinylamino-6-oxoheptanedioate + CoA. It functions in the pathway amino-acid biosynthesis; L-lysine biosynthesis via DAP pathway; LL-2,6-diaminopimelate from (S)-tetrahydrodipicolinate (succinylase route): step 1/3. The protein is 2,3,4,5-tetrahydropyridine-2,6-dicarboxylate N-succinyltransferase of Bartonella henselae (strain ATCC 49882 / DSM 28221 / CCUG 30454 / Houston 1) (Rochalimaea henselae).